A 475-amino-acid chain; its full sequence is Glutamate--tRNA ligase (475 aa).

Positions 8–18 (PSPTGTLHIGT) match the 'HIGH' region motif. The 'KMSKS' region motif lies at 247–251 (KLSKR). Lys250 contributes to the ATP binding site.

Belongs to the class-I aminoacyl-tRNA synthetase family. Glutamate--tRNA ligase type 1 subfamily. As to quaternary structure, monomer.

The protein resides in the cytoplasm. It carries out the reaction tRNA(Glu) + L-glutamate + ATP = L-glutamyl-tRNA(Glu) + AMP + diphosphate. Functionally, catalyzes the attachment of glutamate to tRNA(Glu) in a two-step reaction: glutamate is first activated by ATP to form Glu-AMP and then transferred to the acceptor end of tRNA(Glu). This chain is Glutamate--tRNA ligase, found in Synechococcus sp. (strain RCC307).